We begin with the raw amino-acid sequence, 167 residues long: MAEHQVNYASGLPVVLTSVDKLVQWGRSNSLWALSYGLACCAIEMMAAGGSRYDFDRFGTIFRASPRHSEVMIIAGTLCKKHAEFTRRLYDQMPDPKWVISMGSCANTGGMFNTYSTVQGVDRIIPVDIYVPGCAPRPESFQFALMILQKKIRKEKASRKIAPKRLV.

[4Fe-4S] cluster contacts are provided by C40, C41, C105, and C134.

It belongs to the complex I 20 kDa subunit family. As to quaternary structure, NDH-1 is composed of 14 different subunits. Subunits NuoB, C, D, E, F, and G constitute the peripheral sector of the complex. The cofactor is [4Fe-4S] cluster.

Its subcellular location is the cell inner membrane. It carries out the reaction a quinone + NADH + 5 H(+)(in) = a quinol + NAD(+) + 4 H(+)(out). Functionally, NDH-1 shuttles electrons from NADH, via FMN and iron-sulfur (Fe-S) centers, to quinones in the respiratory chain. The immediate electron acceptor for the enzyme in this species is believed to be ubiquinone. Couples the redox reaction to proton translocation (for every two electrons transferred, four hydrogen ions are translocated across the cytoplasmic membrane), and thus conserves the redox energy in a proton gradient. The sequence is that of NADH-quinone oxidoreductase subunit B from Campylobacter jejuni subsp. jejuni serotype O:6 (strain 81116 / NCTC 11828).